Consider the following 224-residue polypeptide: Oxaloacetate tautomerase FAHD2, mitochondrial (224 aa).

The N-terminal 30 residues, 1 to 30 (MATSMIQRLFKQGTKIVGVGLNYASHAKEL), are a transit peptide targeting the mitochondrion. Positions 67, 69, and 98 each coordinate Mg(2+).

It belongs to the FAH family. Requires Mg(2+) as cofactor. Mn(2+) serves as cofactor.

Its subcellular location is the mitochondrion. It carries out the reaction oxaloacetate = enol-oxaloacetate. Its function is as follows. Tautomerase that converts enol-oxaloacetate, a strong inhibitor of succinate dehydrogenase, to the physiological keto form of oxaloacetate. The protein is Oxaloacetate tautomerase FAHD2, mitochondrial of Arabidopsis thaliana (Mouse-ear cress).